Here is a 277-residue protein sequence, read N- to C-terminus: Energy-coupling factor transporter ATP-binding protein EcfA1 (277 aa).

Residues 5–240 enclose the ABC transporter domain; that stretch reads LEVENLVFKY…SEDMVEIGLD (236 aa). 40-47 is a binding site for ATP; the sequence is GQNGSGKS. The active-site Proton acceptor is the Glu-166.

This sequence belongs to the ABC transporter superfamily. Energy-coupling factor EcfA family. Forms a stable energy-coupling factor (ECF) transporter complex composed of 2 membrane-embedded substrate-binding proteins (S component), 2 ATP-binding proteins (A component) and 2 transmembrane proteins (T component). In L.lactis forms a stable complex with EcfA' and EcfT and substrate-binding components. In E.coli forms a stable complex with EcfA', EcfT and individually with 3 tested substrate-binding components (BioY, NiaX and ThiT) with a stoichiometry of 1.1:1:1. The core ECF complex interacts with a number of substrate-specific binding components, including BioY, BioY2, HmpT, NiaX, PanT, QueT, RibU and ThiT.

Its subcellular location is the cell membrane. Its function is as follows. ATP-binding (A) component of a common energy-coupling factor (ECF) ABC-transporter complex. Unlike classic ABC transporters this ECF transporter provides the energy necessary to transport a number of different substrates. In this organism these probably include biotin, thiamine precursor, niacin, pantothenic acid, queuosine precursor, riboflavin and thiamine. Uptake of niacin or riboflavin into proteosomes containing EcfA1A2T and Niax or RibU has been demonstrated. Uptake requires hydrolyzable Mg-ATP and is substrate-specific; NiaX-containing proteosomes did not transport riboflavin. This is Energy-coupling factor transporter ATP-binding protein EcfA1 from Lactococcus lactis subsp. cremoris (strain MG1363).